The sequence spans 1311 residues: Cyclin-G-associated kinase (1311 aa).

S2 carries the post-translational modification N-acetylserine. Residues S2 and S16 each carry the phosphoserine modification. The 275-residue stretch at 40 to 314 folds into the Protein kinase domain; sequence LRVRRVLAEG…SIAEVVHQLQ (275 aa). D173 functions as the Proton acceptor in the catalytic mechanism. A Phosphatase tensin-type domain is found at 399–566; the sequence is SVANYAKGDL…EYMCDMVAEE (168 aa). Residue S456 is modified to Phosphoserine. Residues 572–710 form the C2 tensin-type domain; that stretch reads SKPILVRAVV…FQVNLEVEVE (139 aa). 2 disordered regions span residues 709–729 and 749–788; these read VEPR…SMRG and FGKP…SADA. S770 carries the post-translational modification Phosphoserine. Low complexity predominate over residues 770-788; the sequence is SPEAEPTDSDSPPSSSADA. T776 carries the post-translational modification Phosphothreonine. S783 carries the phosphoserine modification. Phosphothreonine is present on T794. Disordered stretches follow at residues 801 to 860, 913 to 1035, and 1047 to 1150; these read KEAE…VQQD, CLLG…DLLG, and AVAP…PNYA. Residues S811, S826, S829, S834, and S939 each carry the phosphoserine modification. 2 stretches are compositionally biased toward low complexity: residues 925 to 939 and 950 to 966; these read PPED…LLAS and PRGG…PLLP. Polar residues-rich tracts occupy residues 967–976 and 1070–1080; these read SSGNNSQPCS and SQASWTKSQNP. A Phosphoserine modification is found at S1096. The span at 1109-1124 shows a compositional bias: polar residues; that stretch reads TATTPKGSSSWQTSRP. R1123 carries the omega-N-methylarginine modification. Phosphoserine is present on residues S1176 and S1185. The J domain occupies 1247-1311; it reads SRWTPVGMAD…FENQGSRPLF (65 aa).

The protein belongs to the protein kinase superfamily. Ser/Thr protein kinase family. In terms of tissue distribution, ubiquitous. Highest in testis.

It localises to the cytoplasm. Its subcellular location is the perinuclear region. The protein resides in the golgi apparatus. It is found in the trans-Golgi network. The protein localises to the cell junction. It localises to the focal adhesion. Its subcellular location is the cytoplasmic vesicle. The protein resides in the clathrin-coated vesicle. It carries out the reaction L-seryl-[protein] + ATP = O-phospho-L-seryl-[protein] + ADP + H(+). The catalysed reaction is L-threonyl-[protein] + ATP = O-phospho-L-threonyl-[protein] + ADP + H(+). Functionally, associates with cyclin G and CDK5. Seems to act as an auxilin homolog that is involved in the uncoating of clathrin-coated vesicles by Hsc70 in non-neuronal cells. Expression oscillates slightly during the cell cycle, peaking at G1. May play a role in clathrin-mediated endocytosis and intracellular trafficking, and in the dynamics of clathrin assembly/disassembly. The polypeptide is Cyclin-G-associated kinase (Homo sapiens (Human)).